Consider the following 669-residue polypeptide: PAN2-PAN3 deadenylation complex subunit PAN3 (669 aa).

Over residues 1-10 (MATTFGSPSG) the composition is skewed to polar residues. The interval 1–25 (MATTFGSPSGDSRRGVASPRPKGRE) is disordered. The C3H1-type zinc finger occupies 25 to 54 (EAKNTFCRNVTIYGHCRYENSKCRPPHLPD). The tract at residues 247-519 (QVMPNSTLPV…DIDNFLGGIS (273 aa)) is pseudokinase domain. Residues R298, 347 to 354 (DYHPNSKS), and 408 to 409 (SK) each bind ATP. A coiled-coil region spans residues 520–558 (DQLASVFDSELHAQDTLTNTLGRELESSRIVRLLVKLNM). Residues 559-669 (VNERPELDAS…LIRAGRGQGK (111 aa)) form a knob domain region.

This sequence belongs to the protein kinase superfamily. PAN3 family. In terms of assembly, homodimer. Forms a heterotrimer with a catalytic subunit PAN2 to form the poly(A)-nuclease (PAN) deadenylation complex. Interacts (via PAM-2 motif) with poly(A)-binding protein PAB1 (via PABC domain), conferring substrate specificity of the enzyme complex.

The protein resides in the cytoplasm. Regulatory subunit of the poly(A)-nuclease (PAN) deadenylation complex, one of two cytoplasmic mRNA deadenylases involved in mRNA turnover. PAN specifically shortens poly(A) tails of RNA and the activity is stimulated by poly(A)-binding protein PAB1. PAN deadenylation is followed by rapid degradation of the shortened mRNA tails by the CCR4-NOT complex. Deadenylated mRNAs are then degraded by two alternative mechanisms, namely exosome-mediated 3'-5' exonucleolytic degradation, or deadenylation-dependent mRNA decaping and subsequent 5'-3' exonucleolytic degradation by XRN1. May also be involved in post-transcriptional maturation of mRNA poly(A) tails. PAN3 acts as a positive regulator for PAN activity, recruiting the catalytic subunit PAN2 to mRNA via its interaction with RNA and with PAB1. The polypeptide is PAN2-PAN3 deadenylation complex subunit PAN3 (Phaeosphaeria nodorum (strain SN15 / ATCC MYA-4574 / FGSC 10173) (Glume blotch fungus)).